Consider the following 513-residue polypeptide: ATP synthase subunit alpha (513 aa).

169–176 (GDRQIGKT) lines the ATP pocket.

The protein belongs to the ATPase alpha/beta chains family. In terms of assembly, F-type ATPases have 2 components, CF(1) - the catalytic core - and CF(0) - the membrane proton channel. CF(1) has five subunits: alpha(3), beta(3), gamma(1), delta(1), epsilon(1). CF(0) has three main subunits: a(1), b(2) and c(9-12). The alpha and beta chains form an alternating ring which encloses part of the gamma chain. CF(1) is attached to CF(0) by a central stalk formed by the gamma and epsilon chains, while a peripheral stalk is formed by the delta and b chains.

The protein localises to the cell inner membrane. It carries out the reaction ATP + H2O + 4 H(+)(in) = ADP + phosphate + 5 H(+)(out). Functionally, produces ATP from ADP in the presence of a proton gradient across the membrane. The alpha chain is a regulatory subunit. The chain is ATP synthase subunit alpha from Shewanella halifaxensis (strain HAW-EB4).